The sequence spans 332 residues: 2,3-diketo-L-gulonate reductase (332 aa).

The active-site Proton donor is H44. Residues 168 to 174 (ITMVDMS), 224 to 225 (WK), and 304 to 306 (GHE) each bind NAD(+).

This sequence belongs to the LDH2/MDH2 oxidoreductase family. DlgD subfamily. As to quaternary structure, homodimer.

It is found in the cytoplasm. It carries out the reaction 3-dehydro-L-gulonate + NAD(+) = 2,3-dioxo-L-gulonate + NADH + H(+). The catalysed reaction is 3-dehydro-L-gulonate + NADP(+) = 2,3-dioxo-L-gulonate + NADPH + H(+). Functionally, catalyzes the reduction of 2,3-diketo-L-gulonate in the presence of NADH, to form 3-keto-L-gulonate. This Pasteurella multocida (strain Pm70) protein is 2,3-diketo-L-gulonate reductase.